The primary structure comprises 696 residues: uncharacterized protein (696 aa).

Positions serine 293–glutamate 426 constitute a GGDEF domain. An EAL domain is found at arginine 435–asparagine 689.

This is an uncharacterized protein from Synechocystis sp. (strain ATCC 27184 / PCC 6803 / Kazusa).